A 125-amino-acid chain; its full sequence is Probable 4-amino-4-deoxy-L-arabinose-phosphoundecaprenol flippase subunit ArnF (125 aa).

The Cytoplasmic portion of the chain corresponds to 1–2; that stretch reads MG. Residues 3 to 23 traverse the membrane as a helical segment; the sequence is VMWGLISVAIASLAQLSLGFA. Topologically, residues 24–33 are periplasmic; the sequence is MMRLPSIAHP. Residues 34–54 form a helical membrane-spanning segment; that stretch reads LAFISGLGAFNAATLALFAGL. The Cytoplasmic segment spans residues 55 to 76; sequence AGYLVSVFCWQKTLHTLALSKA. The helical transmembrane segment at 77–97 threads the bilayer; it reads YALLSLSYVLVWVASMLLPGL. The Periplasmic portion of the chain corresponds to 98-100; that stretch reads QGA. Residues 101 to 121 traverse the membrane as a helical segment; it reads FSLKAMLGVLCIMAGVMLIFL. Over 122–125 the chain is Cytoplasmic; sequence PARS.

Belongs to the ArnF family. In terms of assembly, heterodimer of ArnE and ArnF.

The protein localises to the cell inner membrane. The protein operates within bacterial outer membrane biogenesis; lipopolysaccharide biosynthesis. In terms of biological role, translocates 4-amino-4-deoxy-L-arabinose-phosphoundecaprenol (alpha-L-Ara4N-phosphoundecaprenol) from the cytoplasmic to the periplasmic side of the inner membrane. The chain is Probable 4-amino-4-deoxy-L-arabinose-phosphoundecaprenol flippase subunit ArnF from Salmonella choleraesuis (strain SC-B67).